A 420-amino-acid chain; its full sequence is Mannose-1-phosphate guanylyltransferase regulatory subunit alpha (420 aa).

The tract at residues 2–251 (LKAVILIGGP…DGIWSQIKSA (250 aa)) is substrate-binding domain. GDP-alpha-D-mannose is bound by residues Glu-85 and Gln-247. The tract at residues 273–420 (LAKHTPGGPR…SRSFTNQIIL (148 aa)) is hexapeptide repeat domain. The segment at 356–384 (TPNDPNPNDPRARMDSESLFKDGKLLPAI) is C-loop.

This sequence belongs to the transferase hexapeptide repeat family. Component of the GMPPA-GMPPB mannose-1-phosphate guanylyltransferase complex composed of 4 GMPPA subunits and 8 GMPPB subunits; the complex is organized into three layers, a central layer made up of 2 GMPPA dimers sandwiched between two layers each made up of 2 GMPPB dimers.

It localises to the cytoplasm. Functionally, regulatory subunit of the GMPPA-GMPPB mannose-1-phosphate guanylyltransferase complex; reduces the catalytic activity of GMPPB when part of the complex. Mediates allosteric feedback inhibition of GMPPB catalytic activity upon binding GDP-alpha-D-mannose. Together with GMPPB regulates GDP-alpha-D-mannose levels. The sequence is that of Mannose-1-phosphate guanylyltransferase regulatory subunit alpha (GMPPA) from Papio anubis (Olive baboon).